A 611-amino-acid chain; its full sequence is Virulence metalloprotease (611 aa).

The N-terminal stretch at 1–25 (MKKVQRQMKWLFLAASISAALPVSA) is a signal peptide. Residues 26–199 (AKMVQVDDPS…VLQTWEGLNH (174 aa)) constitute a propeptide that is removed on maturation. A Zn(2+)-binding site is contributed by His-346. Glu-347 is an active-site residue. The Zn(2+) site is built by His-350 and Glu-370. The active-site Proton donor is the His-429.

Belongs to the peptidase M4 family. Ca(2+) is required as a cofactor. Zn(2+) serves as cofactor. In terms of processing, seems to be more extensively processed.

It localises to the secreted. Functionally, extracellular zinc metalloprotease involved in the virulence mechanism of V.anguillarum. In Vibrio anguillarum (Listonella anguillarum), this protein is Virulence metalloprotease (empA).